Here is a 98-residue protein sequence, read N- to C-terminus: MNAHDIIIRPVITEKNTALMEEGKYTFEVAQEANKPMIKAAVQQIFNVNVKAVNTMNVKGKLKVRRTRNGQQSGYSRSWKKAIVTLAPGERIEIFEDL.

It belongs to the universal ribosomal protein uL23 family. In terms of assembly, part of the 50S ribosomal subunit. Contacts protein L29, and trigger factor when it is bound to the ribosome.

One of the early assembly proteins it binds 23S rRNA. One of the proteins that surrounds the polypeptide exit tunnel on the outside of the ribosome. Forms the main docking site for trigger factor binding to the ribosome. The sequence is that of Large ribosomal subunit protein uL23 from Herpetosiphon aurantiacus (strain ATCC 23779 / DSM 785 / 114-95).